The chain runs to 123 residues: Heat-labile enterotoxin IIA, B chain (123 aa).

A signal peptide spans Met1–Gly19. An intrachain disulfide couples Cys33 to Cys104.

As to quaternary structure, heterohexamer of one A chain and of five B chains.

Functionally, the biological activity of the toxin is produced by the A chain, which activates intracellular adenyl cyclase. This is Heat-labile enterotoxin IIA, B chain from Escherichia coli.